The sequence spans 179 residues: uncharacterized protein (179 aa).

The segment at 27-54 (TAKKSRVQAREARAAVEENKKAQLERDK) is disordered.

This is an uncharacterized protein from Escherichia coli (strain K12).